A 491-amino-acid chain; its full sequence is MANYFNTLNLRQQLSQLGKCRFMSRDEFADEANYLKGKKVVIVGCGAQGLNQGLNMRDSGLDIAYALRQEAIDEKRASWRRATENGFEVGTYEALIPQADLVVNLTPDKQHSAVVQAVQPLMKSGAALGYSHGFNIVEVGEKIRDDITVVMVAPKCPGTEVREEYKRGFGVPTLIAVHPENDAKGEGMAIAKAWAAATGGHRAGVLESSFVAEVKSDLMGEQTILCGMLQAGSLLCYDKMVAEGVEPGYAGKLIQFGWETITEALKQGGITLMMDRLSNPAKMRAYALSEQLKEIMAPLFAKHMDDIISGKFSETMMADWANDDKNLLTWREETGASAFENYPEYEGKISEQEYFDHGVLMVAMVKAGVELAFDTMIEAGIIAESAYYESLHELPLIANTIARKRLYEMNVVISDTAEYGNYLFSFAAVPMLKEFMTTLQSGDLAKHVPDSGTDNAQLRDINEAIRQHPIEIVGKKLRGYMTDMKKIAVAN.

Residues 17 to 208 (LGKCRFMSRD…GGHRAGVLES (192 aa)) enclose the KARI N-terminal Rossmann domain. Residues 45–48 (CGAQ), Arg68, Arg76, Ser78, and 108–110 (DKQ) each bind NADP(+). The active site involves His132. Gly158 is a binding site for NADP(+). KARI C-terminal knotted domains lie at 209–344 (SFVA…NYPE) and 345–484 (YEGK…MTDM). Mg(2+) is bound by residues Asp217, Glu221, Glu389, and Glu393. Ser414 is a binding site for substrate.

The protein belongs to the ketol-acid reductoisomerase family. Requires Mg(2+) as cofactor.

It carries out the reaction (2R)-2,3-dihydroxy-3-methylbutanoate + NADP(+) = (2S)-2-acetolactate + NADPH + H(+). It catalyses the reaction (2R,3R)-2,3-dihydroxy-3-methylpentanoate + NADP(+) = (S)-2-ethyl-2-hydroxy-3-oxobutanoate + NADPH + H(+). It functions in the pathway amino-acid biosynthesis; L-isoleucine biosynthesis; L-isoleucine from 2-oxobutanoate: step 2/4. The protein operates within amino-acid biosynthesis; L-valine biosynthesis; L-valine from pyruvate: step 2/4. Its function is as follows. Involved in the biosynthesis of branched-chain amino acids (BCAA). Catalyzes an alkyl-migration followed by a ketol-acid reduction of (S)-2-acetolactate (S2AL) to yield (R)-2,3-dihydroxy-isovalerate. In the isomerase reaction, S2AL is rearranged via a Mg-dependent methyl migration to produce 3-hydroxy-3-methyl-2-ketobutyrate (HMKB). In the reductase reaction, this 2-ketoacid undergoes a metal-dependent reduction by NADPH to yield (R)-2,3-dihydroxy-isovalerate. The polypeptide is Ketol-acid reductoisomerase (NADP(+)) (Proteus mirabilis (strain HI4320)).